Consider the following 235-residue polypeptide: MTELARLKFYATQPHSCSYLPDEQATTLFLDPSQPMDVHVYADLSEMGFRRSGDHLYRPHCQNCNACVPARIPAARFIPNRQQRRILKRNADLTVTAARPAFKEEYFDLYRRYIETRHADGDMYPPSRDQFSTFLVRDLPFCWFYEFRLAGRLLAVAVCDLLPNGLSAVYTFYEPDEERRSLGRFAILWQITEALRQDLEAVYLGYWIKNCKKMNYKTQYRPIELLINQRWVTLN.

This sequence belongs to the R-transferase family. Bpt subfamily.

It is found in the cytoplasm. The enzyme catalyses N-terminal L-glutamyl-[protein] + L-leucyl-tRNA(Leu) = N-terminal L-leucyl-L-glutamyl-[protein] + tRNA(Leu) + H(+). The catalysed reaction is N-terminal L-aspartyl-[protein] + L-leucyl-tRNA(Leu) = N-terminal L-leucyl-L-aspartyl-[protein] + tRNA(Leu) + H(+). Its function is as follows. Functions in the N-end rule pathway of protein degradation where it conjugates Leu from its aminoacyl-tRNA to the N-termini of proteins containing an N-terminal aspartate or glutamate. The sequence is that of Aspartate/glutamate leucyltransferase from Pseudomonas putida (strain W619).